The sequence spans 105 residues: Integration host factor subunit alpha (105 aa).

The protein belongs to the bacterial histone-like protein family. As to quaternary structure, heterodimer of an alpha and a beta chain.

This protein is one of the two subunits of integration host factor, a specific DNA-binding protein that functions in genetic recombination as well as in transcriptional and translational control. In Xanthobacter autotrophicus (strain ATCC BAA-1158 / Py2), this protein is Integration host factor subunit alpha.